The sequence spans 259 residues: TCF3 fusion partner homolog (259 aa).

Disordered regions lie at residues 51-72 and 141-210; these read GLGD…GRRR and EDDG…APVQ. The residue at position 167 (Ser-167) is a Phosphoserine. Thr-172 is modified (phosphothreonine). Residues Ser-180 and Ser-188 each carry the phosphoserine modification. Thr-203 carries the post-translational modification Phosphothreonine. A Glycyl lysine isopeptide (Lys-Gly) (interchain with G-Cter in SUMO2) cross-link involves residue Lys-222. The disordered stretch occupies residues 240–259; it reads VSRGPDKLLPYPTLASPPFD. At Ser-255 the chain carries Phosphoserine.

As to quaternary structure, interacts with NOL3; translocates NOL3 into the nucleus and negatively regulated TFPT-induced cell death. Component of the chromatin remodeling INO80 complex; specifically part of a complex module associated with the N-terminus of INO80. As to expression, ubiquitously expressed. Abundant in the brain.

The protein localises to the nucleus. In terms of biological role, appears to promote apoptosis in a p53/TP53-independent manner. Putative regulatory component of the chromatin remodeling INO80 complex which is involved in transcriptional regulation, DNA replication and probably DNA repair. This chain is TCF3 fusion partner homolog (Tfpt), found in Rattus norvegicus (Rat).